We begin with the raw amino-acid sequence, 428 residues long: Beta-1,3-galactosyl-O-glycosyl-glycoprotein beta-1,6-N-acetylglucosaminyltransferase 4 (428 aa).

The Cytoplasmic segment spans residues 1 to 12; it reads MRRCAVLHRLRC. Residues 13-30 traverse the membrane as a helical; Signal-anchor for type II membrane protein segment; sequence KFYVFVVSLFVVVKLVYL. At 31 to 428 the chain is on the lumenal side; it reads KISMDNSIYI…QLQQCLRRVS (398 aa). A glycan (N-linked (GlcNAc...) asparagine) is linked at Asn59. Disulfide bonds link Cys60/Cys214, Cys148/Cys369, Cys169/Cys196, and Cys378/Cys410.

Belongs to the glycosyltransferase 14 family.

The protein localises to the golgi apparatus membrane. It carries out the reaction a 3-O-[beta-D-galactosyl-(1-&gt;3)-N-acetyl-alpha-D-galactosaminyl]-L-seryl-[protein] + UDP-N-acetyl-alpha-D-glucosamine = 3-O-{beta-D-galactosyl-(1-&gt;3)-[N-acetyl-beta-D-glucosaminyl-(1-&gt;6)]-N-acetyl-alpha-D-galactosaminyl}-L-seryl-[protein] + UDP + H(+). It catalyses the reaction a 3-O-[beta-D-galactosyl-(1-&gt;3)-N-acetyl-alpha-D-galactosaminyl]-L-threonyl-[protein] + UDP-N-acetyl-alpha-D-glucosamine = a 3-O-{beta-D-galactosyl-(1-&gt;3)-[N-acetyl-beta-D-glucosaminyl-(1-&gt;6)]-N-acetyl-alpha-D-galactosaminyl}-L-threonyl-[protein] + UDP + H(+). Its pathway is protein modification; protein glycosylation. Its function is as follows. Glycosyltransferase that mediates core 2 O-glycan branching, an important step in mucin-type biosynthesis. The protein is Beta-1,3-galactosyl-O-glycosyl-glycoprotein beta-1,6-N-acetylglucosaminyltransferase 4 (gcnt4) of Danio rerio (Zebrafish).